The chain runs to 288 residues: Aquaporin PIP 1-3 (288 aa).

Positions 1–30 are disordered; it reads MEGKEEDVRLGANRYTERQPIGTAAQGAEE. 2 helical membrane-spanning segments follow: residues 57 to 77 and 92 to 114; these read IAEF…VMGV and IAWS…SGGH. The NPA 1 signature appears at 116–118; the sequence is NPA. 3 helical membrane passes run 135 to 155, 177 to 197, and 211 to 231; these read VFYM…VKGF, GDGL…VFSA, and ILAP…TIPI. Residues 237 to 239 carry the NPA 2 motif; sequence NPA. A helical membrane pass occupies residues 259–279; the sequence is IFWVGPFIGAALAAIYHVVVI.

The protein belongs to the MIP/aquaporin (TC 1.A.8) family. PIP (TC 1.A.8.11) subfamily. In terms of tissue distribution, expressed in roots and leaves.

The protein resides in the cell membrane. Water channel required to facilitate the transport of water across cell membrane. Increases the capacity for root water uptake under water deficit. May play a role in drought avoidance in upland rice. This is Aquaporin PIP 1-3 (PIP1-3) from Oryza sativa subsp. japonica (Rice).